Consider the following 683-residue polypeptide: Stromal interaction molecule 1 (683 aa).

A signal peptide spans 1-22 (MDVCARLALWLLWGLLLHHGQS). The Extracellular portion of the chain corresponds to 23-211 (LSQSHSEKAT…LLTRHNHLKD (189 aa)). EF-hand domains follow at residues 62-95 (SFDAVRSIHKLMDDDANGDVDVEESDEFLREDLN) and 100-124 (TVKHSTFHGEDKLISVEDLWKAWKS). Asp-74, Asp-76, Asn-78, Asp-80, and Glu-85 together coordinate Ca(2+). N-linked (GlcNAc...) asparagine glycosylation is found at Asn-129 and Asn-169. Residues 130 to 198 (WTVDEVVQWL…QLKALDTVLF (69 aa)) enclose the SAM domain. The helical transmembrane segment at 212–232 (FMLVVSIVIGVGGCWFAYIQN) threads the bilayer. Over 233 to 683 (RYSKEHMKKM…LKIFKKPLKK (451 aa)) the chain is Cytoplasmic. Residues 246-440 (LEGLHRAEQS…IEILCGFQIV (195 aa)) are a coiled coil. Ser-255 is modified (phosphoserine). The interval 342–440 (PEALQKWLQL…IEILCGFQIV (99 aa)) is SOAR/CAD. Residues 473–481 (DDVDDMDEE) form a contributes to fast Ca(2+)-dependent inactivation of CRAC channels region. A compositionally biased stretch (low complexity) spans 488 to 497 (MQSPSLQSSV). The tract at residues 488–535 (MQSPSLQSSVRQRLTEPQHGLGSQRDLTHSDSESSLHMSDRQRLAPKP) is disordered. Thr-502 is modified (phosphothreonine). The residue at position 510 (Ser-510) is a Phosphoserine. A compositionally biased stretch (basic and acidic residues) spans 513 to 530 (DLTHSDSESSLHMSDRQR). Thr-515 is subject to Phosphothreonine. 9 positions are modified to phosphoserine: Ser-517, Ser-519, Ser-521, Ser-522, Ser-565, Ser-573, Ser-606, Ser-616, and Ser-626. The segment at 597–683 (LSSPALPSGS…LKIFKKPLKK (87 aa)) is disordered. A Microtubule tip localization signal motif is present at residues 640–643 (TRIP). The span at 653-664 (EEDNGSIGEETD) shows a compositional bias: acidic residues. Ser-658 is subject to Phosphoserine. A Phosphothreonine modification is found at Thr-663. Ser-666 is modified (phosphoserine). Residues 668–683 (GRKKFPLKIFKKPLKK) are compositionally biased toward basic residues. The segment at 670–683 (KKFPLKIFKKPLKK) is required for generation of inwardly rectifying CRAC currents.

As to quaternary structure, monomer in the presence of Ca(2+). It oligomerizes in absence of Ca(2+). Forms homooligomers and heterooligomers with STIM2. Interacts with pore-forming subunits of CRAC channels, ORAI1, ORAI2 and ORAI3; this interaction is potentiated upon Ca(2+) store depletion. Interacts (via the transmembrane region and the SOAR/CAD domain) with SPPL3; the interaction promotes the binding of STIM1 to ORAI1. Interacts with ORAI1. Interacts with MAPRE1; probably required for targeting to the growing microtubule plus ends. Interacts with CRACR2A/EFCAB4B; the interaction is direct and takes place in absence of Ca(2+). Forms a complex with CRACR2A/EFCAB4B and ORAI1 at low concentration of Ca(2+), the complex dissociates at elevated Ca(2+) concentrations. Interacts with SARAF, promoting a slow inactivation of STIM1-dependent SOCE activity, possibly by facilitating the deoligomerization of STIM1. Interacts with EFHB; the interaction takes place upon Ca(2+)-store depletion and inhibits the association with SARAF. Interacts with ASPH. Interacts with SLC35G1; intracellular Ca(2+)-dependent. May interact with ATP1A1, ATP2A2, ATP2B1, ATP2B4, KPNB1 and XPO1; through SLC35G1. Interacts with TMEM203. Interacts with STIMATE, promoting STIM1 conformational switch. Interacts with TMEM178A. Interacts with CASQ1 (via C-terminal end and preferentially with the monomeric form); this interaction increases in response to a depletion of intracellular calcium, decreases both STIM1 aggregation and clustering, interaction of STIM1 with ORAI1 and store-operated Ca(2+) entry (SOCE) activity. Glycosylation is required for cell surface expression. In terms of processing, phosphorylated predominantly on Ser residues.

It is found in the cell membrane. It localises to the endoplasmic reticulum membrane. The protein localises to the sarcoplasmic reticulum. Its subcellular location is the cytoplasm. The protein resides in the cytoskeleton. Its function is as follows. Acts as a Ca(2+) sensor that gates two major inward rectifying Ca(2+) channels at the plasma membrane: Ca(2+) release-activated Ca(2+) (CRAC) channels and arachidonate-regulated Ca(2+)-selective (ARC) channels. Plays a role in mediating store-operated Ca(2+) entry (SOCE), a Ca(2+) influx following depletion of intracellular Ca(2+) stores. Upon Ca(2+) depletion, translocates from the endoplasmic reticulum to the plasma membrane where it activates CRAC channel pore-forming subunits ORA1, ORA2 and ORAI3 to generate sustained and oscillatory Ca(2+) entry. Involved in enamel formation. This chain is Stromal interaction molecule 1 (STIM1), found in Bos taurus (Bovine).